Consider the following 546-residue polypeptide: Adenine DNA glycosylase (546 aa).

The disordered stretch occupies residues 19-51 (RAAVGSGHRKQAASQEGRQKHAKNNSQAKPSAC). Catalysis depends on Glu-131, which acts as the Proton donor/acceptor. The [4Fe-4S] cluster site is built by Cys-287, Cys-294, Cys-297, and Cys-303. The Nudix hydrolase domain maps to 364 to 495 (PREESSATCV…AMKKVFRVYQ (132 aa)). Positions 404-426 (VTWEPSEQLQRKALLQELQRWAG) match the Nudix box motif.

It belongs to the Nth/MutY family. [4Fe-4S] cluster is required as a cofactor.

Its subcellular location is the nucleus. The protein localises to the mitochondrion. The enzyme catalyses Hydrolyzes free adenine bases from 7,8-dihydro-8-oxoguanine:adenine mismatched double-stranded DNA, leaving an apurinic site.. Functionally, involved in oxidative DNA damage repair. Initiates repair of A*oxoG to C*G by removing the inappropriately paired adenine base from the DNA backbone. Possesses both adenine and 2-OH-A DNA glycosylase activities. In Homo sapiens (Human), this protein is Adenine DNA glycosylase (MUTYH).